A 753-amino-acid chain; its full sequence is Polyribonucleotide nucleotidyltransferase (753 aa).

Positions 523 and 529 each coordinate Mg(2+). Residues 589 to 648 (PRIISVRIPVDKIGAVIGPKGAMINQIQDDTGADITIEDDGTVLIGATDGASAEAARSAV) enclose the KH domain. The region spanning 660–732 (GERYLGTVVK…DRGKLSLSPV (73 aa)) is the S1 motif domain. Positions 733–753 (GAESDAVAETADAIESSQTEA) are disordered.

It belongs to the polyribonucleotide nucleotidyltransferase family. The cofactor is Mg(2+).

The protein localises to the cytoplasm. It carries out the reaction RNA(n+1) + phosphate = RNA(n) + a ribonucleoside 5'-diphosphate. Its function is as follows. Involved in mRNA degradation. Catalyzes the phosphorolysis of single-stranded polyribonucleotides processively in the 3'- to 5'-direction. This chain is Polyribonucleotide nucleotidyltransferase, found in Micrococcus luteus (strain ATCC 4698 / DSM 20030 / JCM 1464 / CCM 169 / CCUG 5858 / IAM 1056 / NBRC 3333 / NCIMB 9278 / NCTC 2665 / VKM Ac-2230) (Micrococcus lysodeikticus).